The sequence spans 129 residues: Large-conductance mechanosensitive channel (129 aa).

3 helical membrane-spanning segments follow: residues 14–34 (IIDLAVAVVIGGAFGKIVTSL), 38–58 (IIMPLVGVLTGGIDLTASFVY), and 67–87 (LGVFLQSIIDFLIIAFAIFMA).

Belongs to the MscL family. Homopentamer.

It localises to the cell membrane. Functionally, channel that opens in response to stretch forces in the membrane lipid bilayer. May participate in the regulation of osmotic pressure changes within the cell. The sequence is that of Large-conductance mechanosensitive channel from Lysinibacillus sphaericus (strain C3-41).